Reading from the N-terminus, the 469-residue chain is Putative arginine/ornithine antiporter (469 aa).

12 consecutive transmembrane segments (helical) span residues 8–28 (GFWLLTAFVVGNMVGSGIFSL), 44–64 (AWLLTGAGVLMIALVFGHLSI), 90–110 (AGFTMVWGYWVASWISNVAII), 144–164 (LTFAVCTILLWGTHAILVASI), 179–199 (VLGFVFFIVAGLFVFQTSLFG), 213–233 (IGIGGQVHNAAISTLWAFVGI), 254–274 (ITGLLIALSIYIIVTLITMGV), 301–321 (VIMALLAILCLFGTMLGWILL), 347–367 (SPVIALIITNVMSQVFIFSVI), 375–395 (FTFLTTAATLAYLIPYLVSAI), 417–437 (DGLIAILACAYSVFVIVTGTA), and 439–459 (LTTFILGIGLFFVGLIVYPFV).

This sequence belongs to the amino acid-polyamine-organocation (APC) superfamily. Basic amino acid/polyamine antiporter (APA) (TC 2.A.3.2) family.

It is found in the cell membrane. The catalysed reaction is L-ornithine(in) + L-arginine(out) = L-ornithine(out) + L-arginine(in). Functionally, catalyzes electroneutral exchange between L-arginine and L-ornithine. This is Putative arginine/ornithine antiporter (yvsH) from Bacillus subtilis (strain 168).